The following is a 416-amino-acid chain: Histidine--tRNA ligase (416 aa).

Belongs to the class-II aminoacyl-tRNA synthetase family.

The protein resides in the cytoplasm. It catalyses the reaction tRNA(His) + L-histidine + ATP = L-histidyl-tRNA(His) + AMP + diphosphate + H(+). The polypeptide is Histidine--tRNA ligase (hisS) (Methanocaldococcus jannaschii (strain ATCC 43067 / DSM 2661 / JAL-1 / JCM 10045 / NBRC 100440) (Methanococcus jannaschii)).